We begin with the raw amino-acid sequence, 139 residues long: FAD synthase (139 aa).

ATP is bound by residues 8-9, 13-16, Asp-92, and Tyr-119; these read VF and HPGH.

The protein belongs to the archaeal FAD synthase family. As to quaternary structure, homodimer. It depends on a divalent metal cation as a cofactor.

The enzyme catalyses FMN + ATP + H(+) = FAD + diphosphate. Its pathway is cofactor biosynthesis; FAD biosynthesis; FAD from FMN: step 1/1. In terms of biological role, catalyzes the transfer of the AMP portion of ATP to flavin mononucleotide (FMN) to produce flavin adenine dinucleotide (FAD) coenzyme. This chain is FAD synthase, found in Picrophilus torridus (strain ATCC 700027 / DSM 9790 / JCM 10055 / NBRC 100828 / KAW 2/3).